The primary structure comprises 85 residues: Beta-insect depressant toxin Lqh-dprIT3h (85 aa).

Residues 1–21 form the signal peptide; sequence MKLLLLLTISASMLIEGLVNA. The LCN-type CS-alpha/beta domain occupies 22–82; it reads DGYIRGGDGC…EWDYETDTCG (61 aa). 4 disulfides stabilise this stretch: Cys-31/Cys-81, Cys-35/Cys-56, Cys-42/Cys-63, and Cys-46/Cys-65. Gly-82 carries the post-translational modification Glycine amide.

The protein belongs to the long (4 C-C) scorpion toxin superfamily. Sodium channel inhibitor family. Beta subfamily. Expressed by the venom gland.

Its subcellular location is the secreted. Its function is as follows. Depressant insect beta-toxins cause a transient contraction paralysis followed by a slow flaccid paralysis. They bind voltage-independently at site-4 of sodium channels (Nav) and block action potentials, primarily by depolarizing the axonal membrane and suppressing the sodium current. This depressant toxin is active only on insects. It is found in a relatively small amount in the venom. In Leiurus hebraeus (Hebrew deathstalker scorpion), this protein is Beta-insect depressant toxin Lqh-dprIT3h.